Here is a 445-residue protein sequence, read N- to C-terminus: DNA repair protein RadA (445 aa).

The C4-type zinc-finger motif lies at 10–27 (CSNCANISNKWSGQCFDC). 90 to 97 (GEPGIGKS) lines the ATP pocket. A RadA KNRFG motif motif is present at residues 249–253 (KNRFG). Residues 348–445 (EIYLSIAGGL…HLQELKEIIK (98 aa)) form a lon-protease-like region.

The protein belongs to the RecA family. RadA subfamily.

In terms of biological role, DNA-dependent ATPase involved in processing of recombination intermediates, plays a role in repairing DNA breaks. Stimulates the branch migration of RecA-mediated strand transfer reactions, allowing the 3' invading strand to extend heteroduplex DNA faster. Binds ssDNA in the presence of ADP but not other nucleotides, has ATPase activity that is stimulated by ssDNA and various branched DNA structures, but inhibited by SSB. Does not have RecA's homology-searching function. In Rickettsia prowazekii (strain Madrid E), this protein is DNA repair protein RadA.